The primary structure comprises 175 residues: Alpha-crystallin B chain (175 aa).

Met1 is modified (N-acetylmethionine). Position 19 is a phosphoserine (Ser19). An O-linked (GlcNAc) serine glycan is attached at Ser41. Ser45 and Ser59 each carry phosphoserine. Residues 56–164 (RAPSWFDTGL…PERTIPITRE (109 aa)) enclose the sHSP domain. His83 lines the Zn(2+) pocket. Lys92 is subject to N6-acetyllysine. 4 residues coordinate Zn(2+): His104, Glu106, His111, and His119. Residues 142–175 (VLTVNGPRKQVSGPERTIPITREEKPAVTAAPKK) form a disordered region. At Lys166 the chain carries N6-acetyllysine. O-linked (GlcNAc) threonine glycosylation occurs at Thr170.

It belongs to the small heat shock protein (HSP20) family. As to quaternary structure, heteromer composed of three CRYAA and one CRYAB subunits. Aggregates with homologous proteins, including the small heat shock protein HSPB1, to form large heteromeric complexes. Inter-subunit bridging via zinc ions enhances stability, which is crucial as there is no protein turn over in the lens. Interacts with HSPBAP1 and TTN/titin. Interacts with TMEM109; in the cellular response to DNA damage. Interacts with DES; binds rapidly during early stages of DES filament assembly and a reduced binding seen in the later stages. Interacts with TMED10; the interaction mediates the translocation from the cytoplasm into the ERGIC (endoplasmic reticulum-Golgi intermediate compartment) and thereby secretion. Interacts with ATP6V1A and with MTOR, forming a ternary complex.

It is found in the cytoplasm. The protein resides in the nucleus. The protein localises to the secreted. Its subcellular location is the lysosome. Its function is as follows. May contribute to the transparency and refractive index of the lens. Has chaperone-like activity, preventing aggregation of various proteins under a wide range of stress conditions. In lens epithelial cells, stabilizes the ATP6V1A protein, preventing its degradation by the proteasome. The protein is Alpha-crystallin B chain (CRYAB) of Macaca fascicularis (Crab-eating macaque).